A 1014-amino-acid polypeptide reads, in one-letter code: Calcium-transporting ATPase 2, plasma membrane-type (1014 aa).

Met1 carries the N-acetylmethionine modification. The Cytoplasmic segment spans residues 1–160; that stretch reads MESYLNENFD…NKFAESEMRG (160 aa). Residues 20-31 form an interaction with calmodulin region; the sequence is VLEKWRNLCGVV. Position 45 is a phosphoserine; by CPK1 (Ser45). Residues 161 to 181 traverse the membrane as a helical segment; sequence FWVFVWEALQDMTLMILGVCA. Topologically, residues 182-199 are lumenal; it reads FVSLIVGIATEGWPKGSH. Residues 200 to 220 form a helical membrane-spanning segment; the sequence is DGLGIAASILLVVFVTATSDY. At 221 to 348 the chain is on the cytoplasmic side; the sequence is RQSLQFRDLD…DDETPLQVKL (128 aa). Residues 349-368 form a helical membrane-spanning segment; sequence NGVATIIGKIGLFFAVVTFA. The Lumenal segment spans residues 369–398; it reads VLVQGMFMRKLSTGTHWVWSGDEALELLEY. The chain crosses the membrane as a helical span at residues 399–416; it reads FAIAVTIVVVAVPEGLPL. Over 417-810 the chain is Cytoplasmic; sequence AVTLSLAFAM…KWGRSVYINI (394 aa). Asp454 serves as the catalytic 4-aspartylphosphate intermediate. Asp755 and Asp759 together coordinate Mg(2+). The helical transmembrane segment at 811–829 threads the bilayer; that stretch reads QKFVQFQLTVNVVALVVNF. At 830–840 the chain is on the lumenal side; that stretch reads SSACLTGSAPL. A helical transmembrane segment spans residues 841 to 861; the sequence is TAVQLLWVNMIMDTLGALALA. Over 862 to 881 the chain is Cytoplasmic; the sequence is TEPPNDELMKRLPVGRRGNF. The chain crosses the membrane as a helical span at residues 882–904; it reads ITNAMWRNILGQAVYQFIVIWIL. At 905-916 the chain is on the lumenal side; that stretch reads QAKGKAMFGLDG. A helical membrane pass occupies residues 917 to 938; the sequence is PDSTLMLNTLIFNCFVFCQVFN. Topologically, residues 939-956 are cytoplasmic; it reads EISSREMEEIDVFKGILD. The helical transmembrane segment at 957 to 978 threads the bilayer; the sequence is NYVFVVVIGATVFFQIIIIEFL. The Lumenal portion of the chain corresponds to 979–988; the sequence is GTFASTTPLT. A helical membrane pass occupies residues 989–1010; sequence ITQWIFSIFIGFLGMPIAAGLK. Residues 1011 to 1014 lie on the Cytoplasmic side of the membrane; it reads TIPV.

This sequence belongs to the cation transport ATPase (P-type) (TC 3.A.3) family. Type IIB subfamily.

It is found in the endoplasmic reticulum membrane. It catalyses the reaction Ca(2+)(in) + ATP + H2O = Ca(2+)(out) + ADP + phosphate + H(+). With respect to regulation, activated by calmodulin. In terms of biological role, this magnesium-dependent enzyme catalyzes the hydrolysis of ATP coupled with the translocation of calcium from the cytosol into the endoplasmic reticulum. In Arabidopsis thaliana (Mouse-ear cress), this protein is Calcium-transporting ATPase 2, plasma membrane-type (ACA2).